We begin with the raw amino-acid sequence, 196 residues long: Shikimate kinase (196 aa).

Residue 32 to 37 (GAGKSA) coordinates ATP. Mg(2+) is bound at residue serine 36. Positions 54, 78, and 100 each coordinate substrate. An ATP-binding site is contributed by arginine 138. Residue arginine 157 coordinates substrate. Residue arginine 174 participates in ATP binding.

The protein belongs to the shikimate kinase family. Monomer. Requires Mg(2+) as cofactor.

The protein localises to the cytoplasm. The enzyme catalyses shikimate + ATP = 3-phosphoshikimate + ADP + H(+). Its pathway is metabolic intermediate biosynthesis; chorismate biosynthesis; chorismate from D-erythrose 4-phosphate and phosphoenolpyruvate: step 5/7. In terms of biological role, catalyzes the specific phosphorylation of the 3-hydroxyl group of shikimic acid using ATP as a cosubstrate. In Rhizobium leguminosarum bv. trifolii (strain WSM2304), this protein is Shikimate kinase.